The primary structure comprises 276 residues: NH(3)-dependent NAD(+) synthetase (276 aa).

Residue 43–50 (GISGGVDS) participates in ATP binding. D49 contacts Mg(2+). R146 is a binding site for deamido-NAD(+). T166 is a binding site for ATP. E171 is a binding site for Mg(2+). Positions 179 and 186 each coordinate deamido-NAD(+). ATP-binding residues include K195 and T217. 266–267 (HK) serves as a coordination point for deamido-NAD(+).

The protein belongs to the NAD synthetase family. In terms of assembly, homodimer.

It catalyses the reaction deamido-NAD(+) + NH4(+) + ATP = AMP + diphosphate + NAD(+) + H(+). It functions in the pathway cofactor biosynthesis; NAD(+) biosynthesis; NAD(+) from deamido-NAD(+) (ammonia route): step 1/1. Catalyzes the ATP-dependent amidation of deamido-NAD to form NAD. Uses ammonia as a nitrogen source. The sequence is that of NH(3)-dependent NAD(+) synthetase from Shewanella piezotolerans (strain WP3 / JCM 13877).